The chain runs to 1065 residues: Alpha-L-arabinofuranosidase (1065 aa).

The first 26 residues, 1-26 (MKHWKKMAASLIAISTMVAVVPTTYA), serve as a signal peptide directing secretion. In terms of domain architecture, BIG2 spans 277 to 346 (VVNNKLTLIE…TTELGGVKAE (70 aa)). A disordered region spans residues 997-1031 (KAPTNPGEGDGDKGDGNKPTTPTTGDKTNVNKPGS). Residues 1014–1031 (KPTTPTTGDKTNVNKPGS) show a composition bias toward polar residues. Residues 1040-1060 (VLGLGGAVVALAIAGISLTLW) form a helical membrane-spanning segment.

Belongs to the glycosyl hydrolase 43 family.

It localises to the cell membrane. It catalyses the reaction Hydrolysis of terminal non-reducing alpha-L-arabinofuranoside residues in alpha-L-arabinosides.. In terms of biological role, involved in the type II arabinogalactan (AG) side chains degradation. Releases arabinofuranose (Araf) from alpha-1,3-Araf-substituted beta-1,6-galactooligosaccharides. Can use radish root AGP, larch AG and arabinan. Shows weaker activity with gum arabic and arabinoxylan. This Bifidobacterium longum subsp. longum (strain ATCC 15707 / DSM 20219 / JCM 1217 / NCTC 11818 / E194b) protein is Alpha-L-arabinofuranosidase.